A 328-amino-acid chain; its full sequence is RING finger protein 175 (328 aa).

Transmembrane regions (helical) follow at residues methionine 51–valine 71, leucine 83–tryptophan 103, arginine 104–phenylalanine 121, alanine 149–phenylalanine 169, and glycine 180–isoleucine 200. The segment at cysteine 227–lysine 277 adopts an RING-type; atypical zinc-finger fold.

The protein resides in the membrane. In Homo sapiens (Human), this protein is RING finger protein 175 (RNF175).